The primary structure comprises 151 residues: Methylglyoxal synthase (151 aa).

Residues 6 to 151 form the MGS-like domain; that stretch reads RTMPAHKHVA…DYEAYLAERM (146 aa). Residues His-19, Lys-23, 45–48, and 65–66 each bind substrate; these read TGTT and SG. Asp-71 acts as the Proton donor/acceptor in catalysis. His-98 contacts substrate.

It belongs to the methylglyoxal synthase family.

The enzyme catalyses dihydroxyacetone phosphate = methylglyoxal + phosphate. Its function is as follows. Catalyzes the formation of methylglyoxal from dihydroxyacetone phosphate. This Vibrio parahaemolyticus serotype O3:K6 (strain RIMD 2210633) protein is Methylglyoxal synthase.